Here is a 62-residue protein sequence, read N- to C-terminus: Photosystem II reaction center protein Z (62 aa).

The next 2 membrane-spanning stretches (helical) occupy residues 8 to 28 and 41 to 61; these read ALVA…VAYA and WLGS…NFFV.

Belongs to the PsbZ family. As to quaternary structure, PSII is composed of 1 copy each of membrane proteins PsbA, PsbB, PsbC, PsbD, PsbE, PsbF, PsbH, PsbI, PsbJ, PsbK, PsbL, PsbM, PsbT, PsbX, PsbY, PsbZ, Psb30/Ycf12, peripheral proteins PsbO, CyanoQ (PsbQ), PsbU, PsbV and a large number of cofactors. It forms dimeric complexes.

The protein resides in the cellular thylakoid membrane. May control the interaction of photosystem II (PSII) cores with the light-harvesting antenna, regulates electron flow through the 2 photosystem reaction centers. PSII is a light-driven water plastoquinone oxidoreductase, using light energy to abstract electrons from H(2)O, generating a proton gradient subsequently used for ATP formation. The sequence is that of Photosystem II reaction center protein Z from Nostoc sp. (strain PCC 7120 / SAG 25.82 / UTEX 2576).